A 624-amino-acid polypeptide reads, in one-letter code: DNA mismatch repair protein MutL (624 aa).

The protein belongs to the DNA mismatch repair MutL/HexB family.

Functionally, this protein is involved in the repair of mismatches in DNA. It is required for dam-dependent methyl-directed DNA mismatch repair. May act as a 'molecular matchmaker', a protein that promotes the formation of a stable complex between two or more DNA-binding proteins in an ATP-dependent manner without itself being part of a final effector complex. This chain is DNA mismatch repair protein MutL, found in Chlorobium phaeobacteroides (strain DSM 266 / SMG 266 / 2430).